A 329-amino-acid polypeptide reads, in one-letter code: MQEPKHTDPAAMRGAHHRRARSEVAFRLPDDLDLGGGGAGAFDEIGSEDDLFSTFMDIEKISSGPAAAGGSDRDRAAETSSPPRPKHRHSSSVDGSGFFAAARKDAAASLAEVMEAKKAMTPEQLSELAAIDPKRAKRILANRQSAARSKERKARYITELERKVQTLQTEATTLSAQLTLFQRDTTGLSAENAELKIRLQAMEQQAQLRDALNDALKQELERLKLATGEMTNSNETYSMGLQHVPYNTPFFPLAQHNAARQNGGTQLPPQFQPPRPNVPNHMLSHPNGLQDIMQQDPLGRLQGLDISKGPLVVKSESSSISASESSSTF.

2 disordered regions span residues M1 to V24 and S62 to G97. The bZIP domain maps to D132–L195. The tract at residues K134–R155 is basic motif. Positions L160–L174 are leucine-zipper. A disordered region spans residues R260 to G303.

Belongs to the bZIP family. Binds DNA as a homodimer or as a heterodimer with RF2a. The heterodimer binds stronger to DNA than the homodimer. In terms of tissue distribution, expressed at high levels in roots, low level in leaf sheath, but not in leaf blade. Predominantly expressed in vascular tissues.

Its subcellular location is the nucleus. Functionally, transcription factor probably involved in vascular development and shoot tissue organization. Binds to the DNA sequence 5'-CCGAGTGTGCCCCTGG-3' present in the promoter region Box II of the phloem-specific rice tungro bacilliform virus (RTBV) promoter. May regulate tissue-specific expression of the RTBV promoter and virus replication. This Oryza sativa subsp. japonica (Rice) protein is Transcription factor RF2b (RF2b).